Here is a 262-residue protein sequence, read N- to C-terminus: Phosphonates import ATP-binding protein PhnC 3 (262 aa).

Residues 3 to 245 (IQLECLSVTY…ELNRIYGNAE (243 aa)) form the ABC transporter domain. 36-43 (GASGSGKS) contributes to the ATP binding site.

This sequence belongs to the ABC transporter superfamily. Phosphonates importer (TC 3.A.1.9.1) family. In terms of assembly, the complex is composed of two ATP-binding proteins (PhnC), two transmembrane proteins (PhnE) and a solute-binding protein (PhnD).

It is found in the cell inner membrane. The catalysed reaction is phosphonate(out) + ATP + H2O = phosphonate(in) + ADP + phosphate + H(+). Part of the ABC transporter complex PhnCDE involved in phosphonates import. Responsible for energy coupling to the transport system. In Nostoc sp. (strain PCC 7120 / SAG 25.82 / UTEX 2576), this protein is Phosphonates import ATP-binding protein PhnC 3.